Consider the following 193-residue polypeptide: Ribonuclease HII (193 aa).

The 179-residue stretch at 15–193 (YIVAGIDEAG…PYHRRSFKCC (179 aa)) folds into the RNase H type-2 domain. The a divalent metal cation site is built by Asp21, Glu22, and Asp112.

Belongs to the RNase HII family. Mn(2+) serves as cofactor. Requires Mg(2+) as cofactor.

It localises to the cytoplasm. It carries out the reaction Endonucleolytic cleavage to 5'-phosphomonoester.. In terms of biological role, endonuclease that specifically degrades the RNA of RNA-DNA hybrids. The sequence is that of Ribonuclease HII from Rickettsia felis (strain ATCC VR-1525 / URRWXCal2) (Rickettsia azadi).